Here is a 1239-residue protein sequence, read N- to C-terminus: Structural polyprotein (1239 aa).

The tract at residues 15-95 (RPAPVQRYIP…KKKSKPGKRM (81 aa)) is disordered. The tract at residues 36-62 (RGPSQLQQLVAALGALALQPKQKQKRA) is host transcription inhibition. Residues 38 to 56 (PSQLQQLVAALGALALQPK) show a composition bias toward low complexity. The Nuclear localization signal signature appears at 55–91 (PKQKQKRAQKKPKKTPPPKPKKTQKPKKPTQKKKSKP). Basic residues predominate over residues 57 to 95 (QKQKRAQKKPKKTPPPKPKKTQKPKKPTQKKKSKPGKRM). The segment at 78–106 (QKPKKPTQKKKSKPGKRMRNCMKIENDCI) is binding to the viral RNA. A ribosome-binding region spans residues 91–105 (PGKRMRNCMKIENDC). A disulfide bond links Cys105 and Cys120. The Peptidase S3 domain occupies 105–253 (CIFPVMLDGK…RITPEESVEW (149 aa)). The active-site Charge relay system is the His131. Residues 136–146 (IDNPELAKLTF) carry the Nuclear export signal motif. Residues 147-152 (KKSSKY) are interaction with spike glycoprotein E2. Residue Asp153 is the Charge relay system of the active site. The interval 175-185 (PEGHYNWHHGA) is dimerization of the capsid protein. The active-site Charge relay system is the Ser205. Residues 211–215 (DNTGK) form a dimerization of the capsid protein region. Residues 254–269 (SAAALNITALCVLQNL) are functions as an uncleaved signal peptide for the precursor of protein E3/E2. 9 disulfides stabilise this stretch: Cys264–Cys273, Cys278–Cys282, Cys281–Cys313, Cys339–Cys443, Cys342–Cys348, Cys411–Cys425, Cys471–Cys585, Cys519–Cys545, and Cys521–Cys539. N-linked (GlcNAc...) asparagine; by host glycosylation occurs at Asn268. Residues 322–686 (SVAHFEAYKA…HYYDLYPYWT (365 aa)) lie on the Extracellular side of the membrane. A helical membrane pass occupies residues 687–707 (ITVLASLGLLIVISSGFSCFL). 2 S-palmitoyl cysteine; by host lipidation sites follow: Cys705 and Cys708. The Cytoplasmic segment spans residues 708–751 (CSVARTKCLTPYQLAPGAQLPTFIALLCCAKSARADTLDDFSYL). The segment at 710-714 (VARTK) is interaction with the capsid protein. 3 S-palmitoyl cysteine; by host lipidation sites follow: Cys715, Cys735, and Cys736. A disulfide bridge connects residues Cys715 and Cys736. The Extracellular portion of the chain corresponds to 752–756 (WTNNQ). A helical transmembrane segment spans residues 757–777 (AMFWLQLASPVAAFLCLSYCC). At 778–779 (RN) the chain is on the cytoplasmic side. The helical transmembrane segment at 780–800 (LACCMKIFLGISGLCVIATQA) threads the bilayer. Over 801 to 1216 (YEHSTTMPNQ…WQWLAHTTSG (416 aa)) the chain is Extracellular. Cystine bridges form between Cys849–Cys914, Cys862–Cys894, Cys863–Cys896, and Cys868–Cys878. An E1 fusion peptide loop region spans residues 884–901 (VYPFMWGGAYCFCDTENS). 3 N-linked (GlcNAc...) asparagine; by host glycosylation sites follow: Asn941, Asn1009, and Asn1070. Cystine bridges form between Cys1059-Cys1071, Cys1101-Cys1176, Cys1106-Cys1180, and Cys1128-Cys1170. The chain crosses the membrane as a helical span at residues 1217–1237 (PLTILVVAIIVVVVVSIVVCA). Cys1236 is lipidated: S-palmitoyl cysteine; by host. The Cytoplasmic portion of the chain corresponds to 1238–1239 (RH).

Homodimer. Homomultimer. Interacts with host karyopherin KPNA4; this interaction allows the nuclear import of the viral capsid protein. Interacts with spike glycoprotein E2. Interacts with host IRAK1; the interaction leads to inhibition of IRAK1-dependent signaling. In terms of assembly, the precursor of protein E3/E2 and E1 form a heterodimer shortly after synthesis. As to quaternary structure, interacts with spike glycoprotein E1. The precursor of protein E3/E2 and E1 form a heterodimer shortly after synthesis. Processing of the precursor of protein E3/E2 into E2 and E3 results in a heterodimer of the spike glycoproteins E2 and E1. Spike at virion surface are constituted of a trimer of E2-E1 heterodimers. After target cell attachment and endocytosis, E1 change conformation to form homotrimers. Interacts with 6K protein. Interacts with spike glycoprotein E1. Processing of the precursor of protein E3/E2 into E2 and E3 results in a heterodimer of the spike glycoproteins E2 and E1. Spike at virion surface are constituted of a trimer of E2-E1 heterodimers. Interacts with 6K protein. Interacts with host MXRA8; this interaction mediates virus entry. Interacts with the capsid protein. In terms of assembly, oligomer. Interacts with spike glycoprotein E1. Interacts with spike glycoprotein E2. Post-translationally, structural polyprotein: Specific enzymatic cleavages in vivo yield mature proteins. Capsid protein is auto-cleaved during polyprotein translation, unmasking a signal peptide at the N-terminus of the precursor of E3/E2. The remaining polyprotein is then targeted to the host endoplasmic reticulum, where host signal peptidase cleaves it into pE2, 6K and E1 proteins. pE2 is further processed to mature E3 and E2 by host furin in trans-Golgi vesicle. Palmitoylated via thioester bonds. These palmitoylations may induce disruption of the C-terminus transmembrane. This would result in the reorientation of E2 C-terminus from lumenal to cytoplasmic side. In terms of processing, N-glycosylated. Post-translationally, palmitoylated via thioester bonds.

The protein localises to the virion. The protein resides in the host cytoplasm. It localises to the host cell membrane. It is found in the host nucleus. Its subcellular location is the virion membrane. The protein localises to the host Golgi apparatus. The protein resides in the host trans-Golgi network. It localises to the host endoplasmic reticulum. The enzyme catalyses Autocatalytic release of the core protein from the N-terminus of the togavirus structural polyprotein by hydrolysis of a -Trp-|-Ser- bond.. Functionally, forms an icosahedral capsid with a T=4 symmetry composed of 240 copies of the capsid protein surrounded by a lipid membrane through which penetrate 80 spikes composed of trimers of E1-E2 heterodimers. The capsid protein binds to the viral RNA genome at a site adjacent to a ribosome binding site for viral genome translation following genome release. Possesses a protease activity that results in its autocatalytic cleavage from the nascent structural protein. Following its self-cleavage, the capsid protein transiently associates with ribosomes, and within several minutes the protein binds to viral RNA and rapidly assembles into icosahedric core particles. The resulting nucleocapsid eventually associates with the cytoplasmic domain of the spike glycoprotein E2 at the cell membrane, leading to budding and formation of mature virions. In case of infection, new virions attach to target cells and after clathrin-mediated endocytosis their membrane fuses with the host endosomal membrane. This leads to the release of the nucleocapsid into the cytoplasm, followed by an uncoating event necessary for the genomic RNA to become accessible. The uncoating might be triggered by the interaction of capsid proteins with ribosomes. Binding of ribosomes would release the genomic RNA since the same region is genomic RNA-binding and ribosome-binding. Specifically inhibits interleukin-1 receptor-associated kinase 1/IRAK1-dependent signaling during viral entry, representing a means by which the alphaviruses may evade innate immune detection and activation prior to viral gene expression. Provides the signal sequence for the translocation of the precursor of protein E3/E2 to the host endoplasmic reticulum. Furin-cleaved E3 remains associated with spike glycoprotein E1 and mediates pH protection of the latter during the transport via the secretory pathway. After virion release from the host cell, the assembly protein E3 is gradually released in the extracellular space. Its function is as follows. Plays a role in viral attachment to target host cell, by binding to the cell receptor MXRA8. Synthesized as a p62 precursor which is processed by furin at the cell membrane just before virion budding, giving rise to E2-E1 heterodimer. The p62-E1 heterodimer is stable, whereas E2-E1 is unstable and dissociate at low pH. p62 is processed at the last step, presumably to avoid E1 fusion activation before its final export to cell surface. E2 C-terminus contains a transitory transmembrane that would be disrupted by palmitoylation, resulting in reorientation of the C-terminal tail from lumenal to cytoplasmic side. This step is critical since E2 C-terminus is involved in budding by interacting with capsid proteins. This release of E2 C-terminus in cytoplasm occurs lately in protein export, and precludes premature assembly of particles at the endoplasmic reticulum membrane. In terms of biological role, acts as a viroporin that participates in virus glycoprotein processing and transport to the plasma membrane, cell permeabilization and budding of viral particles. The cation channel is permeable to Na(+)&gt;K(+)&gt;Ca(2+) in vitro. Disrupts the calcium homeostasis of the cell, probably at the endoplasmic reticulum level. This leads to cytoplasmic calcium elevation. Because of its lipophilic properties, the 6K protein is postulated to influence the selection of lipids that interact with the transmembrane domains of the glycoproteins, which, in turn, affects the deformability of the bilayer required for the extreme curvature that occurs as budding proceeds. Present in low amount in virions, about 3% compared to viral glycoproteins. Functionally, class II viral fusion protein. Fusion activity is inactive as long as E1 is bound to E2 in mature virion. After virus attachment to target cell via host MXRA8 and endocytosis, acidification of the endosome induce dissociation of E1/E2 heterodimer and concomitant trimerization of the E1 subunits. This E1 trimer is fusion active, and promotes release of viral nucleocapsid in cytoplasm after endosome and viral membrane fusion. Efficient fusion requires the presence of cholesterol and sphingolipid in the target membrane. This Anopheles amictus (Common banded mosquito) protein is Structural polyprotein.